A 218-amino-acid chain; its full sequence is MDVCLVDGLWGRRILVGGRKGAVHGCGRQRALEDVKVIGMYSRAGWDIMCLSDGGGGEKLEDGLGWRFSRSKIEMLKGSLEEGGGFRDSDLAPVGCRRKGICFPVGGLLPYLALRSVAYICVFGDSSRAPDLIREAFESPHFKRFDGAGTYKEAKGRCGMRFADVVNGAFGQISDMADKVGKGEPEVWCIWKKRGEVEMLLKVKEYRKGYGSGKRRRR.

This sequence belongs to the UPF0329 family.

This is UPF0329 protein ECU10_1860 from Encephalitozoon cuniculi (strain GB-M1) (Microsporidian parasite).